Consider the following 296-residue polypeptide: MRHRRRPGGRSTAGGTPVSQLSIPSPSIEAFHLGPLTIHIYALCILAGIVVAYISGGRRYQARGGKQEQFEELCALAVIAGIIGGRLYHVITDHQLYFGPGRTWYHCFFIWQGGLGIWGAISLGGLAIWLYCRRKGIRFASVADSLAPGILAAQAIGRLGNWFNQELFGRPTSLPWGLEIDLSHRPAGYLQYATFHPTFLYELVWSLVGAVFLLWVDRRWTLDHGRLFTLYVAIYTFGRFWVERLRIDPAHHVGQWRLNDVTALVVFTGAVVILIVLQRRYGKGDEHSSCPAHKTR.

The segment at 1 to 21 (MRHRRRPGGRSTAGGTPVSQL) is disordered. Transmembrane regions (helical) follow at residues 34 to 54 (GPLT…VAYI), 72 to 92 (ELCA…HVIT), 108 to 128 (FFIW…GLAI), 136 to 158 (GIRF…AIGR), 195 to 215 (FHPT…FLLW), 227 to 243 (LFTL…FWVE), and 258 to 278 (LNDV…IVLQ). R158 contacts a 1,2-diacyl-sn-glycero-3-phospho-(1'-sn-glycerol).

This sequence belongs to the Lgt family.

Its subcellular location is the cell membrane. The enzyme catalyses L-cysteinyl-[prolipoprotein] + a 1,2-diacyl-sn-glycero-3-phospho-(1'-sn-glycerol) = an S-1,2-diacyl-sn-glyceryl-L-cysteinyl-[prolipoprotein] + sn-glycerol 1-phosphate + H(+). It functions in the pathway protein modification; lipoprotein biosynthesis (diacylglyceryl transfer). Its function is as follows. Catalyzes the transfer of the diacylglyceryl group from phosphatidylglycerol to the sulfhydryl group of the N-terminal cysteine of a prolipoprotein, the first step in the formation of mature lipoproteins. The sequence is that of Phosphatidylglycerol--prolipoprotein diacylglyceryl transferase from Cutibacterium acnes (strain DSM 16379 / KPA171202) (Propionibacterium acnes).